Reading from the N-terminus, the 430-residue chain is Trigger factor (430 aa).

A PPIase FKBP-type domain is found at 163 to 248 (GNIAIIDFKG…IKDIKVKELP (86 aa)).

Belongs to the FKBP-type PPIase family. Tig subfamily.

It localises to the cytoplasm. It catalyses the reaction [protein]-peptidylproline (omega=180) = [protein]-peptidylproline (omega=0). Its function is as follows. Involved in protein export. Acts as a chaperone by maintaining the newly synthesized protein in an open conformation. Functions as a peptidyl-prolyl cis-trans isomerase. This chain is Trigger factor, found in Clostridium botulinum (strain ATCC 19397 / Type A).